The following is a 430-amino-acid chain: Asparagine--tRNA ligase (430 aa).

This sequence belongs to the class-II aminoacyl-tRNA synthetase family. Homodimer.

Its subcellular location is the cytoplasm. It carries out the reaction tRNA(Asn) + L-asparagine + ATP = L-asparaginyl-tRNA(Asn) + AMP + diphosphate + H(+). This Staphylococcus aureus (strain MW2) protein is Asparagine--tRNA ligase.